Consider the following 375-residue polypeptide: Trichodiene synthase (375 aa).

It belongs to the trichodiene synthase family.

The enzyme catalyses (2E,6E)-farnesyl diphosphate = trichodiene + diphosphate. Its pathway is sesquiterpene biosynthesis; trichothecene biosynthesis. Functionally, TS is a member of the terpene cyclase group of enzymes. It catalyzes the isomerization and cyclization of farnesyl pyro-phosphate to form trichodiene, the first cyclic intermediate in the biosynthetic pathway for trichothecenes. It serves to branch trichothecene biosynthesis from the isoprenoid pathway. The sequence is that of Trichodiene synthase (TRI5) from Fusarium acaciae-mearnsii.